The following is a 110-amino-acid chain: Ig kappa chain V region 2717 (110 aa).

Positions 1-23 (VEVLTQTPSPVSAAVGGTVTISC) are framework-1. Residues 24–36 (QSTKSIYBBBYLA) form a complementarity-determining-1 region. The segment at 37 to 51 (WYQZKPGQPPKALIY) is framework-2. Positions 52-58 (TASSLAS) are complementarity-determining-2. The interval 59-90 (GVPSRFTGSGSGTZFTLTLSDVZCDDAATYYC) is framework-3. The tract at residues 91–99 (GGADYTGYS) is complementarity-determining-3. Positions 100–109 (FGGGTEVVVK) are framework-4.

This is Ig kappa chain V region 2717 from Oryctolagus cuniculus (Rabbit).